The primary structure comprises 124 residues: Large ribosomal subunit protein bL12 (124 aa).

This sequence belongs to the bacterial ribosomal protein bL12 family. Homodimer. Part of the ribosomal stalk of the 50S ribosomal subunit. Forms a multimeric L10(L12)X complex, where L10 forms an elongated spine to which 2 to 4 L12 dimers bind in a sequential fashion. Binds GTP-bound translation factors.

Functionally, forms part of the ribosomal stalk which helps the ribosome interact with GTP-bound translation factors. Is thus essential for accurate translation. The protein is Large ribosomal subunit protein bL12 of Desulforamulus reducens (strain ATCC BAA-1160 / DSM 100696 / MI-1) (Desulfotomaculum reducens).